The primary structure comprises 300 residues: Spermine synthase SPE4 (300 aa).

S5 carries the phosphoserine modification. The region spanning 12 to 255 (DGWFREINDK…GQLGLIVCSN (244 aa)) is the PABS domain. Residues Q44, D99, E119, and 151–152 (DG) contribute to the S-adenosyl 3-(methylsulfanyl)propylamine site. D174 functions as the Proton acceptor in the catalytic mechanism. D177 serves as a coordination point for spermidine.

The protein belongs to the spermidine/spermine synthase family.

It carries out the reaction S-adenosyl 3-(methylsulfanyl)propylamine + spermidine = spermine + S-methyl-5'-thioadenosine + H(+). It participates in amine and polyamine biosynthesis; spermine biosynthesis; spermine from spermidine: step 1/1. This is Spermine synthase SPE4 (SPE4) from Saccharomyces cerevisiae (strain ATCC 204508 / S288c) (Baker's yeast).